A 124-amino-acid chain; its full sequence is Small ribosomal subunit protein uS13 (124 aa).

The interval Gly-94 to Lys-124 is disordered. Residues Gln-100 to Lys-124 show a composition bias toward basic residues.

Belongs to the universal ribosomal protein uS13 family. In terms of assembly, part of the 30S ribosomal subunit. Forms a loose heterodimer with protein S19. Forms two bridges to the 50S subunit in the 70S ribosome.

Functionally, located at the top of the head of the 30S subunit, it contacts several helices of the 16S rRNA. In the 70S ribosome it contacts the 23S rRNA (bridge B1a) and protein L5 of the 50S subunit (bridge B1b), connecting the 2 subunits; these bridges are implicated in subunit movement. Contacts the tRNAs in the A and P-sites. This chain is Small ribosomal subunit protein uS13, found in Christiangramia forsetii (strain DSM 17595 / CGMCC 1.15422 / KT0803) (Gramella forsetii).